A 105-amino-acid chain; its full sequence is Plastocyanin (105 aa).

The Plastocyanin-like domain maps to 1–105 (ETYTVKLGSD…GMVGKITVAG (105 aa)). Cu(2+) is bound by residues H39, C89, H92, and M97.

This sequence belongs to the plastocyanin family. It depends on Cu(2+) as a cofactor.

The protein localises to the cellular thylakoid membrane. Participates in electron transfer between P700 and the cytochrome b6-f complex in photosystem I. The protein is Plastocyanin (petE) of Anabaena variabilis.